The following is a 775-amino-acid chain: Semaphorin-3E (775 aa).

The N-terminal stretch at 1 to 25 (MASAGHIITLLLWGYLLELWTGGHT) is a signal peptide. Residues 32-516 (RLRLSHKELL…SASAVAQVRF (485 aa)) enclose the Sema domain. An N-linked (GlcNAc...) asparagine glycan is attached at N44. A disulfide bond links C105 and C115. N126 carries an N-linked (GlcNAc...) asparagine glycan. 4 cysteine pairs are disulfide-bonded: C133–C142, C270–C382, C294–C342, and C519–C537. The N-linked (GlcNAc...) asparagine glycan is linked to N330. One can recognise an Ig-like C2-type domain in the interval 581–669 (ALDKTEEHLA…SFVHTVRKIT (89 aa)). 2 N-linked (GlcNAc...) asparagine glycosylation sites follow: N595 and N596. C654 and C729 form a disulfide bridge. The tract at residues 742–775 (LKMSPSKWKYANPQEKKLRSKPEHYRLPRHTLDS) is disordered. Residues 755–775 (QEKKLRSKPEHYRLPRHTLDS) are compositionally biased toward basic and acidic residues.

Belongs to the semaphorin family. In terms of assembly, interacts with PLXND1.

It localises to the secreted. Functionally, plays an important role in signaling via the cell surface receptor PLXND1. Mediates reorganization of the actin cytoskeleton, leading to the retraction of cell projections. Promotes focal adhesion disassembly and inhibits adhesion of endothelial cells to the extracellular matrix. Regulates angiogenesis, both during embryogenesis and after birth. Can down-regulate sprouting angiogenesis. Required for normal vascular patterning during embryogenesis. Plays an important role in ensuring the specificity of synapse formation. The chain is Semaphorin-3E (SEMA3E) from Homo sapiens (Human).